Reading from the N-terminus, the 340-residue chain is S-adenosylmethionine:tRNA ribosyltransferase-isomerase (340 aa).

The protein belongs to the QueA family. In terms of assembly, monomer.

The protein resides in the cytoplasm. It carries out the reaction 7-aminomethyl-7-carbaguanosine(34) in tRNA + S-adenosyl-L-methionine = epoxyqueuosine(34) in tRNA + adenine + L-methionine + 2 H(+). It participates in tRNA modification; tRNA-queuosine biosynthesis. In terms of biological role, transfers and isomerizes the ribose moiety from AdoMet to the 7-aminomethyl group of 7-deazaguanine (preQ1-tRNA) to give epoxyqueuosine (oQ-tRNA). The polypeptide is S-adenosylmethionine:tRNA ribosyltransferase-isomerase (Francisella tularensis subsp. holarctica (strain OSU18)).